The chain runs to 263 residues: Urease accessory protein UreD 1 (263 aa).

It belongs to the UreD family. UreD, UreF and UreG form a complex that acts as a GTP-hydrolysis-dependent molecular chaperone, activating the urease apoprotein by helping to assemble the nickel containing metallocenter of UreC. The UreE protein probably delivers the nickel.

The protein resides in the cytoplasm. Functionally, required for maturation of urease via the functional incorporation of the urease nickel metallocenter. This is Urease accessory protein UreD 1 from Synechococcus sp. (strain JA-3-3Ab) (Cyanobacteria bacterium Yellowstone A-Prime).